Here is a 78-residue protein sequence, read N- to C-terminus: Large ribosomal subunit protein bL28 (78 aa).

The protein belongs to the bacterial ribosomal protein bL28 family.

The sequence is that of Large ribosomal subunit protein bL28 from Glaesserella parasuis serovar 5 (strain SH0165) (Haemophilus parasuis).